The following is a 238-amino-acid chain: Isoprene-epoxide--glutathione S-transferase (238 aa).

The GST N-terminal domain occupies 7 to 82; it reads YVPAWGIPDI…YLKNKFGDKL (76 aa). The GST C-terminal domain maps to 118-238; sequence DAGWETYIPF…LERIRKQYDI (121 aa).

It belongs to the GST superfamily. As to quaternary structure, homodimer.

The enzyme catalyses 2-glutathionyl-2-methylbut-3-en-1-ol = (3R)-3,4-epoxy-3-methylbut-1-ene + glutathione. With respect to regulation, activity is inhibited by 1,2-epoxyhexane. In terms of biological role, involved in isoprene degradation. Catalyzes the glutathione-dependent ring opening of various epoxides. The highest conversion rate is observed with the physiological substrate, 3,4-epoxy-3-methyl-1-butene, which is the primary oxidation product of isoprene. It can also use other epoxides, including epoxyethane, epoxypropane, epithiopropane, epichlorohydrin, epifluorohydrin, epibromohydrin, 1,2-epoxybutane, 1,2-epoxyhexane, cis-2,3-epoxybutane, cis-1,2-dichloroepoxyethane and trans-1,2-dichloroepoxyethane. The protein is Isoprene-epoxide--glutathione S-transferase of Rhodococcus sp. (strain AD45).